We begin with the raw amino-acid sequence, 455 residues long: GTPase Der (455 aa).

2 EngA-type G domains span residues Pro4–Asp169 and Ile178–Arg353. Residues Gly10–Ser17, Asp57–Leu61, Asn120–Glu123, Gly184–Ser191, Asp231–Ile235, and Asn296–Asp299 contribute to the GTP site. One can recognise a KH-like domain in the interval Arg354–Gln439.

Belongs to the TRAFAC class TrmE-Era-EngA-EngB-Septin-like GTPase superfamily. EngA (Der) GTPase family. As to quaternary structure, associates with the 50S ribosomal subunit.

In terms of biological role, GTPase that plays an essential role in the late steps of ribosome biogenesis. The polypeptide is GTPase Der (Synechococcus sp. (strain CC9902)).